Consider the following 352-residue polypeptide: Protein Wnt-11 (352 aa).

Residues 1–22 (MKIYFLLGTFLTFLLHTRICQG) form the signal peptide. N38 and N88 each carry an N-linked (GlcNAc...) asparagine glycan. 5 disulfides stabilise this stretch: C78–C89, C128–C136, C138–C155, C207–C221, and C209–C216. S213 carries the O-palmitoleoyl serine; by PORCN lipid modification. Residues Y273 and Y280 each carry the sulfotyrosine modification. 6 cysteine pairs are disulfide-bonded: C281–C312, C297–C307, C311–C351, C327–C342, C329–C339, and C334–C335. Residue N298 is glycosylated (N-linked (GlcNAc...) asparagine).

It belongs to the Wnt family. Post-translationally, glycosylation is required for protein secretion. In terms of processing, palmitoleoylation is required for efficient binding to frizzled receptors. Depalmitoleoylation leads to Wnt signaling pathway inhibition. As to expression, in embryos, expressed in the neural tube, dorsal somite, mesenchymal cells within the dorsal fin, branchial arches and heart muscle, becoming expressed throughout the myocardium by the tadpole stage (stage 45). Prior to neural crest cell migration, expressed in a domain flanking the neural crest on the medial or neural (the opposite side to wnt11b). Weakly expressed in the developing pronephros from stage 25, with expression increasing from stages 30 to 35.

Its subcellular location is the secreted. The protein localises to the extracellular space. It is found in the extracellular matrix. In terms of biological role, ligand for members of the frizzled family of seven transmembrane receptors. Shares much functionality with wnt11b. Signals through a non-canonical Wnt pathway to activate Jun-N-terminal kinase (JNK) to regulate gastrulation movements. Acts in a non-cell-autonomous manner to control neural crest migration, probably acting as an extracellular signal from surrounding tissue, but is not required for neural crest induction. Acts redundantly with wnt11b during pronephros induction. Regulates cardiac morphogenesis through the activation of JNK, but is not required for cardiac differentiation. Essential for dorsal fin development; required for an epithelial to mesenchymal transformation event prior to migration of cells into the fin, and ultimately for maintenance of fin structure. Mediates dorsal fin development through a non-canonical pathway mediated by Ca(2+). The polypeptide is Protein Wnt-11 (Xenopus laevis (African clawed frog)).